We begin with the raw amino-acid sequence, 429 residues long: Histidine--tRNA ligase (429 aa).

This sequence belongs to the class-II aminoacyl-tRNA synthetase family. In terms of assembly, homodimer.

Its subcellular location is the cytoplasm. The enzyme catalyses tRNA(His) + L-histidine + ATP = L-histidyl-tRNA(His) + AMP + diphosphate + H(+). The sequence is that of Histidine--tRNA ligase from Chlorobium phaeobacteroides (strain DSM 266 / SMG 266 / 2430).